A 280-amino-acid polypeptide reads, in one-letter code: Biotin carboxyl carrier protein of acetyl-CoA carboxylase 1, chloroplastic (280 aa).

The transit peptide at 1–82 directs the protein to the chloroplast; sequence MASSSFSVTS…SNAAKVDGPS (82 aa). The span at 52-75 shows a compositional bias: polar residues; the sequence is PSRSSYPVVKAQSNKVSTGASSNA. Disordered regions lie at residues 52–106 and 164–215; these read PSRS…ATEE and QPSY…GTFY. Positions 177 to 188 are enriched in low complexity; that stretch reads PAAAAPAPSTPA. The segment covering 189 to 198 has biased composition (pro residues); that stretch reads SLPPPSPPTP. The Biotinyl-binding domain occupies 203–279; the sequence is LPTVKSPMAG…SLDTPLFVVQ (77 aa). At Lys245 the chain carries N6-biotinyllysine.

As to quaternary structure, acetyl-CoA carboxylase is a heterohexamer composed of biotin carboxyl carrier protein, biotin carboxylase and 2 subunits each of ACCase subunit alpha and ACCase plastid-coded subunit beta (accD). As to expression, present in developing tissues from roots, leaves, flowers, siliques and seeds (at protein level).

The protein localises to the plastid. The protein resides in the chloroplast. It functions in the pathway lipid metabolism; fatty acid biosynthesis. This protein is a component of the acetyl coenzyme A carboxylase complex; first, biotin carboxylase catalyzes the carboxylation of the carrier protein and then the transcarboxylase transfers the carboxyl group to form malonyl-CoA. In Arabidopsis thaliana (Mouse-ear cress), this protein is Biotin carboxyl carrier protein of acetyl-CoA carboxylase 1, chloroplastic (BCCP1).